The chain runs to 145 residues: MAKKKIEAIIKLQVAAGKANPSPPIGPALGQHGVNIMGFCKEFNAKTQGMEPGMPIPVEISVYSDRSFTFEMKTPPASYLIKKAIKVKSGSSNPSKDFIGTITREQLEEIAKVKDPDLTAADIDAAVRIIAGSARSMGVKVEGVE.

Belongs to the universal ribosomal protein uL11 family. In terms of assembly, part of the ribosomal stalk of the 50S ribosomal subunit. Interacts with L10 and the large rRNA to form the base of the stalk. L10 forms an elongated spine to which L12 dimers bind in a sequential fashion forming a multimeric L10(L12)X complex. In terms of processing, one or more lysine residues are methylated.

Its function is as follows. Forms part of the ribosomal stalk which helps the ribosome interact with GTP-bound translation factors. The chain is Large ribosomal subunit protein uL11 from Francisella philomiragia subsp. philomiragia (strain ATCC 25017 / CCUG 19701 / FSC 153 / O#319-036).